Consider the following 408-residue polypeptide: tRNA pseudouridine synthase D (408 aa).

The active-site Nucleophile is Asp-82. One can recognise a TRUD domain in the interval 157–367 (GVPNRFGEQR…MEGERRPLRV (211 aa)).

It belongs to the pseudouridine synthase TruD family.

It carries out the reaction uridine(13) in tRNA = pseudouridine(13) in tRNA. Functionally, responsible for synthesis of pseudouridine from uracil-13 in transfer RNAs. In Geobacter sulfurreducens (strain ATCC 51573 / DSM 12127 / PCA), this protein is tRNA pseudouridine synthase D.